Consider the following 473-residue polypeptide: MSADVSGTESGSESGPEPEPGPEPGPESRPESRPKPGPGPEPRPESGPEPGPRSGLRRGPKQGSERSQLCPEHFEPLSWFCLSERRPVCATCAGFGGRCHRHRIRRAEEHAEELRNKIVDQCERLQLQSAGISKYMAEVLQGKNQKAVVMASAARDLIIQRLSLVRSLCESEEQRLLEQVHGEEERAHQSILTQRAHWVDAVQKLDTLRTNMVDMITHLDDLQLIQREQEIFERAEEAEGILDPQDSEKLSFNEKCAWSPLLTQLWAASVLGSLSGVEEVLIDERTVSPLLHLSEDRRTLTFIAKKSKVCSDEPERFDHWPNALAATAFQTGLHAWIVNVKHSCAYKVGVASDQLPRKGSGNDCRLGHNAFSWVFSRYDQEFCFSHNGYHEPLPLLRCPAQLGMLLDLQAGELVFYEPASGTVLHIHRASFPQVLFPVFAVADQLISIVRGPLATVRLDSPPHHPCRSGHASR.

Residues 1–69 (MSADVSGTES…PKQGSERSQL (69 aa)) form a disordered region. Positions 35 to 51 (KPGPGPEPRPESGPEPG) are enriched in pro residues. Residues 65–113 (ERSQLCPEHFEPLSWFCLSERRPVCATCAGFGGRCHRHRIRRAEEHAEE) form a B box-type zinc finger. A B30.2/SPRY domain is found at 259 to 455 (SPLLTQLWAA…ISIVRGPLAT (197 aa)).

In terms of assembly, interacts with YWHAZ/14-3-3 protein zeta. Interacts with TRPV5 and TRPV6. According to PubMed:10978534, testis-specific. According to PubMed:16371431, broadly expressed.

Its subcellular location is the cytoplasm. It localises to the membrane. May regulate epithelial calcium transport by inhibiting TRPV5 activity. This is B box and SPRY domain-containing protein (Bspry) from Mus musculus (Mouse).